We begin with the raw amino-acid sequence, 272 residues long: 4-hydroxy-tetrahydrodipicolinate reductase (272 aa).

NAD(+) is bound by residues glycine 10 to methionine 15, glutamate 36, glycine 100 to threonine 102, and serine 124 to methionine 127. Histidine 157 functions as the Proton donor/acceptor in the catalytic mechanism. Histidine 158 serves as a coordination point for (S)-2,3,4,5-tetrahydrodipicolinate. Lysine 161 serves as the catalytic Proton donor. Glycine 167–threonine 168 contacts (S)-2,3,4,5-tetrahydrodipicolinate.

This sequence belongs to the DapB family.

It localises to the cytoplasm. It catalyses the reaction (S)-2,3,4,5-tetrahydrodipicolinate + NAD(+) + H2O = (2S,4S)-4-hydroxy-2,3,4,5-tetrahydrodipicolinate + NADH + H(+). It carries out the reaction (S)-2,3,4,5-tetrahydrodipicolinate + NADP(+) + H2O = (2S,4S)-4-hydroxy-2,3,4,5-tetrahydrodipicolinate + NADPH + H(+). Its pathway is amino-acid biosynthesis; L-lysine biosynthesis via DAP pathway; (S)-tetrahydrodipicolinate from L-aspartate: step 4/4. Functionally, catalyzes the conversion of 4-hydroxy-tetrahydrodipicolinate (HTPA) to tetrahydrodipicolinate. The protein is 4-hydroxy-tetrahydrodipicolinate reductase of Afipia carboxidovorans (strain ATCC 49405 / DSM 1227 / KCTC 32145 / OM5) (Oligotropha carboxidovorans).